Reading from the N-terminus, the 340-residue chain is NADH-quinone oxidoreductase subunit H (340 aa).

The next 8 helical transmembrane spans lie at 4 to 24, 78 to 98, 113 to 133, 151 to 171, 184 to 204, 244 to 264, 273 to 293, and 316 to 336; these read TIGILIWIIIKILVIVVPLLL, YLFVIAPLFALVPSLVGWAVI, VLYLFAMSSLGVYGVLIAGWA, VSYEIAMGFALVGVLLAAGSM, MLHWWFIPLLPLFLVFWIAGI, SMILISTFMAILFMGGWLSPF, IFFVVPGFVWLLLKISFFLFV, and VLIPVTIVWLVVTSLMVVAHV.

This sequence belongs to the complex I subunit 1 family. As to quaternary structure, NDH-1 is composed of 14 different subunits. Subunits NuoA, H, J, K, L, M, N constitute the membrane sector of the complex.

Its subcellular location is the cell inner membrane. The catalysed reaction is a quinone + NADH + 5 H(+)(in) = a quinol + NAD(+) + 4 H(+)(out). Functionally, NDH-1 shuttles electrons from NADH, via FMN and iron-sulfur (Fe-S) centers, to quinones in the respiratory chain. The immediate electron acceptor for the enzyme in this species is believed to be ubiquinone. Couples the redox reaction to proton translocation (for every two electrons transferred, four hydrogen ions are translocated across the cytoplasmic membrane), and thus conserves the redox energy in a proton gradient. This subunit may bind ubiquinone. The sequence is that of NADH-quinone oxidoreductase subunit H from Legionella pneumophila (strain Paris).